The following is a 288-amino-acid chain: Mortality factor 4-like protein 2 (288 aa).

Polar residues predominate over residues 1–15; that stretch reads MSSRKQASQTRGQQS. Positions 1–115 are disordered; that stretch reads MSSRKQASQT…DPTVESEEAF (115 aa). Position 71 is a phosphoserine (Ser-71). Residues 117 to 288 enclose the MRG domain; the sequence is SRMEVKVKIP…ASADYHRKAL (172 aa).

Component of the NuA4 histone acetyltransferase complex which contains the catalytic subunit KAT5/TIP60 and the subunits EP400, TRRAP/PAF400, BRD8/SMAP, EPC1, DMAP1/DNMAP1, RUVBL1/TIP49, RUVBL2, ING3, actin, ACTL6A/BAF53A, MORF4L1/MRG15, MORF4L2/MRGX, MRGBP, YEATS4/GAS41 and VPS72/YL1. The NuA4 complex interacts with MYC and the adenovirus E1A protein. MORF4L1 may also participate in the formation of NuA4 related complexes which lack the KAT5/TIP60 catalytic subunit, but which include the SWI/SNF related protein SRCAP. Component of the MSIN3A histone deacetylase complex, which includes SIN3A, HDAC2, ARID4B, MORF4L1, RBBP4/RbAp48, and RBBP7/RbAp46. Interacts with MRFAP1 and RB1. May also interact with one or more as yet undefined members of the TLE (transducin-like enhancer of split) family of transcriptional repressors.

It localises to the nucleus. Functionally, component of the NuA4 histone acetyltransferase complex which is involved in transcriptional activation of select genes principally by acetylation of nucleosomal histone H4 and H2A. This modification may both alter nucleosome - DNA interactions and promote interaction of the modified histones with other proteins which positively regulate transcription. This complex may be required for the activation of transcriptional programs associated with oncogene and proto-oncogene mediated growth induction, tumor suppressor mediated growth arrest and replicative senescence, apoptosis, and DNA repair. The NuA4 complex ATPase and helicase activities seem to be, at least in part, contributed by the association of RUVBL1 and RUVBL2 with EP400. NuA4 may also play a direct role in DNA repair when directly recruited to sites of DNA damage. Also a component of the MSIN3A complex which acts to repress transcription by deacetylation of nucleosomal histones. The protein is Mortality factor 4-like protein 2 (Morf4l2) of Rattus norvegicus (Rat).